Consider the following 415-residue polypeptide: uncharacterized protein (415 aa).

In terms of domain architecture, TRAM spans 1–52; that stretch reads MQDLTINAIGAQGDGLARTADGKPAFVPLTLPGEVVRAKMDGARGEVVEILA. The [4Fe-4S] cluster site is built by C62, C68, C71, and C147. The S-adenosyl-L-methionine site is built by Q252, Y279, E299, and D347. Residue C373 is the Nucleophile of the active site.

It belongs to the class I-like SAM-binding methyltransferase superfamily. RNA M5U methyltransferase family.

This is an uncharacterized protein from Caulobacter vibrioides (strain ATCC 19089 / CIP 103742 / CB 15) (Caulobacter crescentus).